The primary structure comprises 424 residues: Serine--tRNA ligase (424 aa).

230–232 (TAE) provides a ligand contact to L-serine. ATP is bound at residue 261-263 (RSE). L-serine is bound at residue glutamate 284. 348 to 351 (EISS) contributes to the ATP binding site. L-serine is bound at residue serine 384.

This sequence belongs to the class-II aminoacyl-tRNA synthetase family. Type-1 seryl-tRNA synthetase subfamily. As to quaternary structure, homodimer. The tRNA molecule binds across the dimer.

Its subcellular location is the cytoplasm. The enzyme catalyses tRNA(Ser) + L-serine + ATP = L-seryl-tRNA(Ser) + AMP + diphosphate + H(+). It catalyses the reaction tRNA(Sec) + L-serine + ATP = L-seryl-tRNA(Sec) + AMP + diphosphate + H(+). It functions in the pathway aminoacyl-tRNA biosynthesis; selenocysteinyl-tRNA(Sec) biosynthesis; L-seryl-tRNA(Sec) from L-serine and tRNA(Sec): step 1/1. In terms of biological role, catalyzes the attachment of serine to tRNA(Ser). Is also able to aminoacylate tRNA(Sec) with serine, to form the misacylated tRNA L-seryl-tRNA(Sec), which will be further converted into selenocysteinyl-tRNA(Sec). The sequence is that of Serine--tRNA ligase from Streptococcus pneumoniae (strain ATCC 700669 / Spain 23F-1).